Here is a 511-residue protein sequence, read N- to C-terminus: Lysine--tRNA ligase (511 aa).

Positions 421 and 428 each coordinate Mg(2+).

Belongs to the class-II aminoacyl-tRNA synthetase family. As to quaternary structure, homodimer. It depends on Mg(2+) as a cofactor.

The protein localises to the cytoplasm. It catalyses the reaction tRNA(Lys) + L-lysine + ATP = L-lysyl-tRNA(Lys) + AMP + diphosphate. The protein is Lysine--tRNA ligase of Janthinobacterium sp. (strain Marseille) (Minibacterium massiliensis).